Here is a 444-residue protein sequence, read N- to C-terminus: Trigger factor (444 aa).

One can recognise a PPIase FKBP-type domain in the interval 161–246; sequence GDRVVIDFKG…VQKVEGQKLP (86 aa).

The protein belongs to the FKBP-type PPIase family. Tig subfamily.

It is found in the cytoplasm. The catalysed reaction is [protein]-peptidylproline (omega=180) = [protein]-peptidylproline (omega=0). In terms of biological role, involved in protein export. Acts as a chaperone by maintaining the newly synthesized protein in an open conformation. Functions as a peptidyl-prolyl cis-trans isomerase. The chain is Trigger factor from Saccharophagus degradans (strain 2-40 / ATCC 43961 / DSM 17024).